The primary structure comprises 295 residues: MITELHGIDIRENEPLKHYTYTKVGGPADFLAFPRNHYELSRIVAYANKENMPWLVLGNASNLIVRDGGIRGFVIMFDKLNAVHLNGYTLEAEAGANLIETTKIAKFHSLTGFEFACGIPGSIGGAVFMNAGAYGGEISHIFLSAKVLTSSGEIKTISARDMAFGYRHSAIQETGDIVISAKFALKPGNYDTISQEMNRLNHLRQLKQPLEFPSCGSVFKRPPGHFAGQLIMEANLKGHRIGGVEVSEKHAGFMINVADGTAKDYEDLIAYVIETVENHSGVRLEPEVRIIGENL.

The 166-residue stretch at 23–188 (KVGGPADFLA…ISAKFALKPG (166 aa)) folds into the FAD-binding PCMH-type domain. R167 is an active-site residue. S217 acts as the Proton donor in catalysis. The active site involves E287.

The protein belongs to the MurB family. The cofactor is FAD.

It localises to the cytoplasm. It catalyses the reaction UDP-N-acetyl-alpha-D-muramate + NADP(+) = UDP-N-acetyl-3-O-(1-carboxyvinyl)-alpha-D-glucosamine + NADPH + H(+). The protein operates within cell wall biogenesis; peptidoglycan biosynthesis. Cell wall formation. This chain is UDP-N-acetylenolpyruvoylglucosamine reductase, found in Streptococcus pyogenes serotype M6 (strain ATCC BAA-946 / MGAS10394).